The following is a 775-amino-acid chain: BLOC-2 complex member HPS6 (775 aa).

As to quaternary structure, component of the biogenesis of lysosome-related organelles complex-2 (or BLOC2) composed of HPS3, HPS5 and HPS6. Interacts with HPS5 and HPS3. Interacts with biogenesis of lysosome-related organelles complex-1 (BLOC1). Interacts with AP-3 complex. Interacts with MNAT1. Interacts with DCTN1 and dynein intermediate chain. In terms of tissue distribution, ubiquitous.

The protein resides in the microsome membrane. It localises to the cytoplasm. The protein localises to the cytosol. It is found in the early endosome membrane. Its subcellular location is the lysosome membrane. Its function is as follows. May regulate the synthesis and function of lysosomes and of highly specialized organelles, such as melanosomes and platelet dense granules. Acts as a cargo adapter for the dynein-dynactin motor complex to mediate the transport of lysosomes from the cell periphery to the perinuclear region. Facilitates retrograde lysosomal trafficking by linking the motor complex to lysosomes, and perinuclear positioning of lysosomes is crucial for the delivery of endocytic cargos to lysosomes, for lysosome maturation and functioning. This chain is BLOC-2 complex member HPS6 (HPS6), found in Homo sapiens (Human).